We begin with the raw amino-acid sequence, 196 residues long: Calcium channel flower (196 aa).

The next 3 helical transmembrane spans lie at 36 to 56 (LGIV…LSII), 67 to 89 (IIQM…ICIE), and 114 to 134 (AVPP…GLIF).

It belongs to the calcium channel flower family. Homomultimer. Associates with the dally/ magu complex.

It is found in the cell membrane. The protein localises to the cytoplasmic vesicle. The protein resides in the secretory vesicle. It localises to the synaptic vesicle membrane. Its subcellular location is the presynaptic cell membrane. It is found in the endosome. Its activity is regulated as follows. Channel activity is inhibited by La(3+), which reduces Ca(2+) influx and thus inhibits it's function in promoting activity-dependent bulk endocytosis (ADBE) in response to high stimuli. In terms of biological role, transmembrane protein which mediates synaptic endocytosis, fitness-based cell culling, neuronal culling, morphogen gradient scaling, and calcium transport. Regulates synaptic endocytosis and hence couples exo- with endocytosis. Controls two major modes of synaptic vesicle (SV) endocytosis in the synaptic boutons of neuromuscular junctions (NMJs); Ca(2+) channel-independent Clathrin-mediated endocytosis (CME) in response to mild stimulation, and Ca(2+) channel-dependent activity-dependent bulk endocytosis (ADBE) in response to strong stimulation. Functions in ADBE and subsequent SV reformation from bulk endosomes by initiating Ca(2+) channel-dependent phosphatidylinositol 4,5-bisphosphate (PtdIns(4,5)P2) compartmentalization in synaptic boutons. There it acts at the periactive zone to provide the low Ca(2+) levels required to initiate Calcineurin activation and upregulate PtdIns(4,5)P2. Conversely PtdIns(4,5)P2 enhances fwe Ca(2+) channel-activity, establishing a positive feedback loop that induces PtdIns(4,5)P2 microdomain at the periactive zone. These microdomains trigger bulk membrane invagination (i.e. ADBE) by triggering actin polymerization while also promoting localization of fwe to bulk endosomes, thereby removing the ADBE trigger to reduce endocytosis and prevent excess membrane uptake. PtdIns(4,5)P2 then promotes SV reformation from the bulk endosomes, to coordinate ADBE and subsequent SV reformation. Different combinations of the flower isoforms at the cell membrane are also required for the identification and elimination of suboptimal or supernumerary cells during development, regeneration, and adulthood. Required for the recognition and elimination of unfit cells in the developing wing during cell competition. In the developing pupal retina, mediates the elimination of unwanted postmitotic neurons, including supernumerary photoreceptor neurons that form at the periphery of the retina and are contained within incomplete ommatidia units. Also required for efficient elimination and replacement of old neurons by newly generated neurons during regeneration in the adult brain following mechanical injury. Downstream of the flower fitness fingerprints, cells identified as unwanted or unfit are eliminated via apoptosis through the expression of ahuizotl (azot). However, the cells marked for elimination by the flower isoforms only undergo apoptosis if additional thresholds are met; (1) their neighboring fit/healthy cells express different levels of the fwe isoforms, and (2) the levels of the protective signal SPARC expressed by the loser or unwanted cells are unable to inhibit caspase activation. These additional thresholds for flower-mediated apoptosis, allows useful cells to recover from transient and limited stress before they are unnecessarily eliminated. Functions with dally and magu in a mechanism of scaling, which utilises apoptosis to ensure that the dpp morphogen gradient, which mediates organ growth, remains proportional to the size of the growing wing. In this mechanism, fwe represses dally- and Magu-dependent activity in expanding the gradient, and dally/Magu inhibits fwe-dependent apoptosis to keep cell death rate low. When the levels of these different proteins are optimally regulated the gradient correctly scales with organ growth but when this fails, fwe-mediated apoptosis is activated to trim the developing tissue to match the correct size of the gradient. The polypeptide is Calcium channel flower (Drosophila virilis (Fruit fly)).